A 447-amino-acid polypeptide reads, in one-letter code: UDP-N-acetylmuramate--L-alanine ligase (447 aa).

Position 108 to 114 (108 to 114 (GSHGKTS)) interacts with ATP.

The protein belongs to the MurCDEF family.

The protein localises to the cytoplasm. The catalysed reaction is UDP-N-acetyl-alpha-D-muramate + L-alanine + ATP = UDP-N-acetyl-alpha-D-muramoyl-L-alanine + ADP + phosphate + H(+). Its pathway is cell wall biogenesis; peptidoglycan biosynthesis. Cell wall formation. This is UDP-N-acetylmuramate--L-alanine ligase from Listeria monocytogenes serotype 4a (strain HCC23).